We begin with the raw amino-acid sequence, 210 residues long: MGQKVNPIGFRLGVIKSWDSKWYAEADYAKLLHEDLKIRAFLKKRLYSSGISKIEIERAANKTKINIYTARPGLIIGKKGSEVETIKKELSNLTSKEIFINIIEVRKPELDAQLVAENVALQLERRIAFRRAMKKSVTSALKFGAKGIRITCSGRLGGAEMSRTEWYREGRVPLHTLRADIDYGCAEAKTTYGLIGIKVLIFKGEVLPGH.

The 69-residue stretch at 38-106 (IRAFLKKRLY…EIFINIIEVR (69 aa)) folds into the KH type-2 domain.

This sequence belongs to the universal ribosomal protein uS3 family. In terms of assembly, part of the 30S ribosomal subunit. Forms a tight complex with proteins S10 and S14.

Its function is as follows. Binds the lower part of the 30S subunit head. Binds mRNA in the 70S ribosome, positioning it for translation. In Pelobacter propionicus (strain DSM 2379 / NBRC 103807 / OttBd1), this protein is Small ribosomal subunit protein uS3.